A 352-amino-acid polypeptide reads, in one-letter code: Ion-translocating oxidoreductase complex subunit D (352 aa).

Transmembrane regions (helical) follow at residues 20–40 (IMLLVVIAALPGIAAQTWFFG), 42–62 (GTLFQIVLAAITALVAEAIVL), 69–91 (VASHLQDYSALLTGLLLAVSIPP), and 123–143 (PAMIGYVVLLISFPVQMTSWL). Thr-187 is subject to FMN phosphoryl threonine. A run of 5 helical transmembrane segments spans residues 215–235 (LAGVGWQWVNLAWLVGGVFLL), 242–262 (WHIPVSFLLTLALCAALGWLF), 267–287 (LASPQLHLLSGATMLGAFFIL), 301–321 (LIFGALAGVLVWLIRSFGGYP), and 322–342 (DGVAFAVLLANITVPLIDYYT).

This sequence belongs to the NqrB/RnfD family. In terms of assembly, the complex is composed of six subunits: RsxA, RsxB, RsxC, RsxD, RsxE and RsxG. It depends on FMN as a cofactor.

The protein resides in the cell inner membrane. Functionally, part of a membrane-bound complex that couples electron transfer with translocation of ions across the membrane. Required to maintain the reduced state of SoxR. The polypeptide is Ion-translocating oxidoreductase complex subunit D (Salmonella agona (strain SL483)).